The chain runs to 72 residues: MKKKIHPRYSKITATCSCGNIIEIFSTINHNINLDICAKCHPFYTGKQRVIDTGGRVERFKKRFKFTKQELN.

Zn(2+) is bound by residues Cys16, Cys18, Cys37, and Cys40.

It belongs to the bacterial ribosomal protein bL31 family. Type A subfamily. Part of the 50S ribosomal subunit. Zn(2+) serves as cofactor.

In terms of biological role, binds the 23S rRNA. The sequence is that of Large ribosomal subunit protein bL31 from Buchnera aphidicola subsp. Acyrthosiphon pisum (strain Tuc7).